A 554-amino-acid chain; its full sequence is Glucose-6-phosphate isomerase (554 aa).

The active-site Proton donor is E359. Catalysis depends on residues H390 and K518.

This sequence belongs to the GPI family.

It localises to the cytoplasm. It carries out the reaction alpha-D-glucose 6-phosphate = beta-D-fructose 6-phosphate. Its pathway is carbohydrate biosynthesis; gluconeogenesis. It participates in carbohydrate degradation; glycolysis; D-glyceraldehyde 3-phosphate and glycerone phosphate from D-glucose: step 2/4. Catalyzes the reversible isomerization of glucose-6-phosphate to fructose-6-phosphate. This is Glucose-6-phosphate isomerase from Pseudomonas savastanoi pv. phaseolicola (strain 1448A / Race 6) (Pseudomonas syringae pv. phaseolicola (strain 1448A / Race 6)).